We begin with the raw amino-acid sequence, 313 residues long: 3'-5' exoribonuclease YhaM (313 aa).

The OB DNA-binding region spans 22-90 (SSVKGTASNG…QLKIRQIRQA (69 aa)). Residues 163 to 279 (HVVSMLRLAK…LHQIDLMDAS (117 aa)) form the HD domain.

This sequence belongs to the YhaM family.

In terms of biological role, shows a 3'-5' exoribonuclease activity. The sequence is that of 3'-5' exoribonuclease YhaM from Listeria monocytogenes serovar 1/2a (strain ATCC BAA-679 / EGD-e).